The following is a 120-amino-acid chain: MESQAKVKISDKAEGIIERDVQNAVIGRREISLKVYHMGSGTPSRKDIIKAIIQAFASQENLVVVRKISTSYGAGISNIKLHIYKSREILEKIEPKYLLDRDAGTKQKKGGSKGGQGAKG.

The tract at residues 101 to 120 (RDAGTKQKKGGSKGGQGAKG) is disordered.

The protein belongs to the eukaryotic ribosomal protein eS24 family.

The chain is Small ribosomal subunit protein eS24 from Saccharolobus islandicus (strain Y.N.15.51 / Yellowstone #2) (Sulfolobus islandicus).